We begin with the raw amino-acid sequence, 295 residues long: Accessory protein VasW (295 aa).

In terms of biological role, plays an accessory role in VasX-mediated bacterial killing. The polypeptide is Accessory protein VasW (Vibrio cholerae serotype O1 (strain ATCC 39315 / El Tor Inaba N16961)).